Consider the following 186-residue polypeptide: Large ribosomal subunit protein uL5 (186 aa).

Belongs to the universal ribosomal protein uL5 family. In terms of assembly, part of the 50S ribosomal subunit; part of the 5S rRNA/L5/L18/L25 subcomplex. Contacts the 5S rRNA and the P site tRNA. Forms a bridge to the 30S subunit in the 70S ribosome.

Functionally, this is one of the proteins that bind and probably mediate the attachment of the 5S RNA into the large ribosomal subunit, where it forms part of the central protuberance. In the 70S ribosome it contacts protein S13 of the 30S subunit (bridge B1b), connecting the 2 subunits; this bridge is implicated in subunit movement. Contacts the P site tRNA; the 5S rRNA and some of its associated proteins might help stabilize positioning of ribosome-bound tRNAs. The protein is Large ribosomal subunit protein uL5 of Legionella pneumophila subsp. pneumophila (strain Philadelphia 1 / ATCC 33152 / DSM 7513).